Consider the following 263-residue polypeptide: Hydroxyacylglutathione hydrolase (263 aa).

Zn(2+) is bound by residues histidine 55, histidine 57, aspartate 59, histidine 60, histidine 117, aspartate 134, and histidine 172.

It belongs to the metallo-beta-lactamase superfamily. Glyoxalase II family. In terms of assembly, monomer. Zn(2+) serves as cofactor.

It carries out the reaction an S-(2-hydroxyacyl)glutathione + H2O = a 2-hydroxy carboxylate + glutathione + H(+). It participates in secondary metabolite metabolism; methylglyoxal degradation; (R)-lactate from methylglyoxal: step 2/2. Functionally, thiolesterase that catalyzes the hydrolysis of S-D-lactoyl-glutathione to form glutathione and D-lactic acid. The sequence is that of Hydroxyacylglutathione hydrolase from Shewanella baltica (strain OS155 / ATCC BAA-1091).